Here is a 322-residue protein sequence, read N- to C-terminus: Ribose 1,5-bisphosphate isomerase (322 aa).

Residues 20 to 23 (RGAG) and arginine 63 contribute to the substrate site. Catalysis depends on cysteine 133, which acts as the Proton acceptor. 135–137 (SKA) contributes to the substrate binding site. The active-site Proton donor is aspartate 202. Substrate contacts are provided by residues 212–213 (NK) and lysine 238.

This sequence belongs to the eIF-2B alpha/beta/delta subunits family. R15P isomerase subfamily. Homohexamer; trimer of dimers.

The enzyme catalyses alpha-D-ribose 1,5-bisphosphate = D-ribulose 1,5-bisphosphate. Is highly activated in the presence of AMP, with an increase of &gt;40-fold in activity levels. Among other nucleotides, isomerase activity is slightly increased in the presence of GMP, but CMP, UMP, TMP, and NAD(+) have no effect; therefore, AMP is likely the major activator of R15P isomerase in vivo. To a lesser extent, various compounds with an adenosyl moiety, such as dAMP, adenosine, or methylthioadenosine, can also act as activators. The regulation of this enzyme by AMP prevents excess degradation of intracellular AMP by the archaeal AMP degradation pathway. Functionally, catalyzes the isomerization of ribose 1,5-bisphosphate (R15P) to ribulose 1,5-bisphosphate (RuBP), the CO(2) acceptor and substrate for RubisCO. Only accepts the alpha-anomer of D-ribose 1,5-bisphosphate as substrate, being inactive on the beta-anomer. Displays a strict substrate specificity, since other phosphorylated sugars such as R5P, ribose, G16P, G6P, G1P, FBP, F6P, and PRPP, are not substrates. Functions in an archaeal AMP degradation pathway, together with AMP phosphorylase and RubisCO. This chain is Ribose 1,5-bisphosphate isomerase, found in Thermococcus kodakarensis (strain ATCC BAA-918 / JCM 12380 / KOD1) (Pyrococcus kodakaraensis (strain KOD1)).